The following is a 564-amino-acid chain: Eukaryotic translation initiation factor 3 subunit L (564 aa).

At Ser2 the chain carries N-acetylserine. Residues 331–537 (DAIRVFANIL…IHIADTKVAR (207 aa)) form the PCI domain. 2 positions are modified to N6-acetyllysine: Lys465 and Lys549.

The protein belongs to the eIF-3 subunit L family. As to quaternary structure, component of the eukaryotic translation initiation factor 3 (eIF-3) complex, which is composed of 13 subunits: EIF3A, EIF3B, EIF3C, EIF3D, EIF3E, EIF3F, EIF3G, EIF3H, EIF3I, EIF3J, EIF3K, EIF3L and EIF3M. The eIF-3 complex appears to include 3 stable modules: module A is composed of EIF3A, EIF3B, EIF3G and EIF3I; module B is composed of EIF3F, EIF3H, and EIF3M; and module C is composed of EIF3C, EIF3D, EIF3E, EIF3K and EIF3L. EIF3C of module C binds EIF3B of module A and EIF3H of module B, thereby linking the three modules. EIF3J is a labile subunit that binds to the eIF-3 complex via EIF3B. The eIF-3 complex interacts with RPS6KB1 under conditions of nutrient depletion. Mitogenic stimulation leads to binding and activation of a complex composed of MTOR and RPTOR, leading to phosphorylation and release of RPS6KB1 and binding of EIF4B to eIF-3. Interacts with RRN3.

It is found in the cytoplasm. Functionally, component of the eukaryotic translation initiation factor 3 (eIF-3) complex, which is required for several steps in the initiation of protein synthesis. The eIF-3 complex associates with the 40S ribosome and facilitates the recruitment of eIF-1, eIF-1A, eIF-2:GTP:methionyl-tRNAi and eIF-5 to form the 43S pre-initiation complex (43S PIC). The eIF-3 complex stimulates mRNA recruitment to the 43S PIC and scanning of the mRNA for AUG recognition. The eIF-3 complex is also required for disassembly and recycling of post-termination ribosomal complexes and subsequently prevents premature joining of the 40S and 60S ribosomal subunits prior to initiation. The eIF-3 complex specifically targets and initiates translation of a subset of mRNAs involved in cell proliferation, including cell cycling, differentiation and apoptosis, and uses different modes of RNA stem-loop binding to exert either translational activation or repression. This Bos taurus (Bovine) protein is Eukaryotic translation initiation factor 3 subunit L.